We begin with the raw amino-acid sequence, 201 residues long: MANHFSQLAKKSKTNGNSEKIAKEQTGKPSLEIYKLGDDVLRQNSKRITKVDESIRKLTREMIQSMYAAKGIGLAAPQIGINKELLVIDVNFEDSAAEPLILINPEITDYGTTLNSYEEGCLSIPGVYLNVVRPSTIKLKFRDEMGRPRKMKADGLLARCIQHEMDHLNGILFVDRVTSKDDLKKELIKEGFHEKDVISIT.

A disordered region spans residues 1–24 (MANHFSQLAKKSKTNGNSEKIAKE). Fe cation is bound by residues Cys121 and His163. Glu164 is a catalytic residue. Residue His167 participates in Fe cation binding.

The protein belongs to the polypeptide deformylase family. Fe(2+) is required as a cofactor.

The catalysed reaction is N-terminal N-formyl-L-methionyl-[peptide] + H2O = N-terminal L-methionyl-[peptide] + formate. Removes the formyl group from the N-terminal Met of newly synthesized proteins. Requires at least a dipeptide for an efficient rate of reaction. N-terminal L-methionine is a prerequisite for activity but the enzyme has broad specificity at other positions. This Prochlorococcus marinus (strain MIT 9312) protein is Peptide deformylase.